Here is a 445-residue protein sequence, read N- to C-terminus: Xylose isomerase (445 aa).

Residues His-99 and Asp-102 contribute to the active site. 7 residues coordinate Mg(2+): Glu-230, Glu-266, His-269, Asp-294, Asp-305, Asp-307, and Asp-337.

Belongs to the xylose isomerase family. As to quaternary structure, homotetramer. The cofactor is Mg(2+).

The protein resides in the cytoplasm. It catalyses the reaction alpha-D-xylose = alpha-D-xylulofuranose. In Geobacillus kaustophilus (strain HTA426), this protein is Xylose isomerase.